A 457-amino-acid chain; its full sequence is Ribosomal protein uS12 methylthiotransferase RimO (457 aa).

The 120-residue stretch at 9–128 (KKVHFISLGC…ILKNSDEGEK (120 aa)) folds into the MTTase N-terminal domain. [4Fe-4S] cluster is bound by residues Cys-18, Cys-54, Cys-88, Cys-163, Cys-167, and Cys-170. In terms of domain architecture, Radical SAM core spans 149-384 (SQPGHRAYLK…MEVQQNISRE (236 aa)). The 69-residue stretch at 387 to 455 (SDFVGKTLQV…EYDLIGEIVV (69 aa)) folds into the TRAM domain.

This sequence belongs to the methylthiotransferase family. RimO subfamily. [4Fe-4S] cluster is required as a cofactor.

The protein localises to the cytoplasm. It carries out the reaction L-aspartate(89)-[ribosomal protein uS12]-hydrogen + (sulfur carrier)-SH + AH2 + 2 S-adenosyl-L-methionine = 3-methylsulfanyl-L-aspartate(89)-[ribosomal protein uS12]-hydrogen + (sulfur carrier)-H + 5'-deoxyadenosine + L-methionine + A + S-adenosyl-L-homocysteine + 2 H(+). Functionally, catalyzes the methylthiolation of an aspartic acid residue of ribosomal protein uS12. The protein is Ribosomal protein uS12 methylthiotransferase RimO of Bdellovibrio bacteriovorus (strain ATCC 15356 / DSM 50701 / NCIMB 9529 / HD100).